We begin with the raw amino-acid sequence, 742 residues long: Ectonucleotide pyrophosphatase/phosphodiesterase 1 (742 aa).

Topologically, residues 1-113 are cytoplasmic; it reads MELQNDLESL…TGFHSKVPFK (113 aa). The chain crosses the membrane as a helical span at residues 114–134; the sequence is IIFRTLFGSLVFAIFLILMIN. Topologically, residues 135–742 are extracellular; that stretch reads IAKPHHSTRV…SIDDLVDSDT (608 aa). 2 N-linked (GlcNAc...) asparagine glycosylation sites follow: Asn-161 and Asn-204. The interval 168-545 is phosphodiesterase; the sequence is PLTIVISLDG…VFTIGSHGYD (378 aa). Thr-219 acts as the Nucleophile in catalysis. 3 N-linked (GlcNAc...) asparagine glycosylation sites follow: Asn-264, Asn-296, and Asn-403. Over residues 640 to 659 the composition is skewed to acidic residues; that stretch reads EETEQDNVDNDNDDNDDGNT. 2 disordered regions span residues 640-670 and 686-711; these read EETE…SSSL and TLLG…TAST. Residues 691 to 711 show a composition bias toward low complexity; the sequence is TSPSSRSSSSSSIQASATAST.

The protein belongs to the nucleotide pyrophosphatase/phosphodiesterase family. In terms of processing, autophosphorylated as part of the catalytic cycle of phosphodiesterase/pyrophosphatase activity. Post-translationally, N-glycosylated.

It localises to the membrane. It carries out the reaction Hydrolytically removes 5'-nucleotides successively from the 3'-hydroxy termini of 3'-hydroxy-terminated oligonucleotides.. The catalysed reaction is a ribonucleoside 5'-triphosphate + H2O = a ribonucleoside 5'-phosphate + diphosphate + H(+). The enzyme catalyses a 2'-deoxyribonucleoside 5'-triphosphate + H2O = a 2'-deoxyribonucleoside 5'-phosphate + diphosphate + H(+). Functionally, mediates extracellular nucleotide derived phosphate hydrolysis along with NPP2 and PHO5. This Saccharomyces cerevisiae (strain ATCC 204508 / S288c) (Baker's yeast) protein is Ectonucleotide pyrophosphatase/phosphodiesterase 1 (NPP1).